A 128-amino-acid polypeptide reads, in one-letter code: Sirohydrochlorin cobaltochelatase (128 aa).

His9 serves as the catalytic Proton acceptor. His9 serves as a coordination point for Co(2+). Residues Lys43 and 68 to 73 contribute to the substrate site; that span reads FATGTH. Co(2+) is bound at residue His73.

This sequence belongs to the CbiX family. CbiXS subfamily. Homotetramer; dimer of dimers.

The enzyme catalyses Co-sirohydrochlorin + 2 H(+) = sirohydrochlorin + Co(2+). The protein operates within cofactor biosynthesis; adenosylcobalamin biosynthesis; cob(II)yrinate a,c-diamide from sirohydrochlorin (anaerobic route): step 1/10. Catalyzes the insertion of Co(2+) into sirohydrochlorin as part of the anaerobic pathway to cobalamin biosynthesis. The protein is Sirohydrochlorin cobaltochelatase of Saccharolobus islandicus (strain Y.G.57.14 / Yellowstone #1) (Sulfolobus islandicus).